A 786-amino-acid polypeptide reads, in one-letter code: Ribosome biogenesis protein BOP1 homolog (786 aa).

Over residues 1-11 (MTKKLTIKRKV) the composition is skewed to basic residues. The disordered stretch occupies residues 1–161 (MTKKLTIKRK…DSDTSDEEDI (161 aa)). Composition is skewed to acidic residues over residues 28–37 (DNEEEEEEDL), 46–55 (EDSTDDEGID), 62–74 (SSED…DEEG), and 86–103 (SGDD…EDDA). Residues 104-113 (DAKKSSKNND) show a composition bias toward basic and acidic residues. A compositionally biased stretch (acidic residues) spans 151–160 (ADSDTSDEED). WD repeat units follow at residues 447-488 (GHTD…RTIE), 490-528 (EDVV…KLLV), 572-614 (THFK…SQIP), 617-655 (KSKG…LIKK), 658-697 (TNSK…KPYQ), 701-740 (LHRN…DLLQ), and 756-786 (REEF…RLFT).

The protein belongs to the WD repeat BOP1/ERB1 family.

The protein localises to the nucleus. The protein resides in the nucleolus. It localises to the nucleoplasm. Its function is as follows. Required for maturation of ribosomal RNAs and formation of the large ribosomal subunit. The sequence is that of Ribosome biogenesis protein BOP1 homolog from Drosophila pseudoobscura pseudoobscura (Fruit fly).